Consider the following 250-residue polypeptide: Uracil-DNA glycosylase (250 aa).

Asp78 functions as the Proton acceptor in the catalytic mechanism. Residues 228–250 (RGQKPVDWSGEQNNASRQGKFAL) are disordered.

It belongs to the uracil-DNA glycosylase (UDG) superfamily. UNG family.

The protein resides in the cytoplasm. It carries out the reaction Hydrolyzes single-stranded DNA or mismatched double-stranded DNA and polynucleotides, releasing free uracil.. Functionally, excises uracil residues from the DNA which can arise as a result of misincorporation of dUMP residues by DNA polymerase or due to deamination of cytosine. The protein is Uracil-DNA glycosylase of Bordetella bronchiseptica (strain ATCC BAA-588 / NCTC 13252 / RB50) (Alcaligenes bronchisepticus).